The chain runs to 116 residues: Cocaine- and amphetamine-regulated transcript protein (116 aa).

An N-terminal signal peptide occupies residues Met-1–Ala-27. Tyr-41 is subject to Phosphotyrosine. Residue Ser-48 is modified to Phosphoserine. Disulfide bonds link Cys-82–Cys-100, Cys-88–Cys-108, and Cys-102–Cys-115.

Belongs to the CART family.

The protein localises to the secreted. Satiety factor closely associated with the actions of leptin and neuropeptide y; this anorectic peptide inhibits both normal and starvation-induced feeding and completely blocks the feeding response induced by neuropeptide Y and regulated by leptin in the hypothalamus. The polypeptide is Cocaine- and amphetamine-regulated transcript protein (CARTPT) (Bos taurus (Bovine)).